The following is an 806-amino-acid chain: Phenylalanine--tRNA ligase beta subunit (806 aa).

The region spanning 40 to 155 is the tRNA-binding domain; that stretch reads NKGVKGVVVG…SDAEVGADAL (116 aa). The B5 domain occupies 409–484; the sequence is VQERTVSVTA…RLYGYDHIPV (76 aa). The Mg(2+) site is built by Asp462, Asp468, Glu471, and Glu472. An FDX-ACB domain is found at 712 to 805; that stretch reads PRFPSMTRDM…VEEKFGAELR (94 aa).

It belongs to the phenylalanyl-tRNA synthetase beta subunit family. Type 1 subfamily. In terms of assembly, tetramer of two alpha and two beta subunits. Mg(2+) is required as a cofactor.

The protein resides in the cytoplasm. The enzyme catalyses tRNA(Phe) + L-phenylalanine + ATP = L-phenylalanyl-tRNA(Phe) + AMP + diphosphate + H(+). The chain is Phenylalanine--tRNA ligase beta subunit from Bacillus cereus (strain ATCC 14579 / DSM 31 / CCUG 7414 / JCM 2152 / NBRC 15305 / NCIMB 9373 / NCTC 2599 / NRRL B-3711).